A 282-amino-acid polypeptide reads, in one-letter code: tRNA (guanine-N(7)-)-methyltransferase (282 aa).

Residues 1–31 (MSLTDDQASKRQAYRAAKEANRKELKHVKID) form a disordered region. A compositionally biased stretch (basic and acidic residues) spans 16–31 (AAKEANRKELKHVKID). S-adenosyl-L-methionine contacts are provided by residues Gly-99, 122 to 123 (EI), 157 to 158 (NA), and Cys-177. The active site involves Asp-180. Residue 255–257 (TEE) coordinates S-adenosyl-L-methionine.

This sequence belongs to the class I-like SAM-binding methyltransferase superfamily. TrmB family. In terms of assembly, forms a complex with TRM82.

The protein resides in the nucleus. The enzyme catalyses guanosine(46) in tRNA + S-adenosyl-L-methionine = N(7)-methylguanosine(46) in tRNA + S-adenosyl-L-homocysteine. Its pathway is tRNA modification; N(7)-methylguanine-tRNA biosynthesis. Catalyzes the formation of N(7)-methylguanine at position 46 (m7G46) in tRNA. This chain is tRNA (guanine-N(7)-)-methyltransferase, found in Eremothecium gossypii (strain ATCC 10895 / CBS 109.51 / FGSC 9923 / NRRL Y-1056) (Yeast).